The chain runs to 1098 residues: NACHT, LRR and PYD domains-containing protein 5 (1098 aa).

Residues 1–97 form the Pyrin domain; that stretch reads MREAKIAPLS…SEMARDEMKK (97 aa). Residues 104–131 are disordered; sequence SEDSAPTKTDQGPSMKEVPGPREDPQDS. The span at 122–131 shows a compositional bias: basic and acidic residues; that stretch reads PGPREDPQDS. The NACHT domain maps to 180 to 503; the sequence is LTVVLHGPPG…ALFYVLRGVE (324 aa). 186 to 193 lines the ATP pocket; that stretch reads GPPGVGKS. LRR repeat units lie at residues 851–871, 880–900, 908–928, 937–958, 965–985, 993–1013, and 1021–1041; these read GLTHLSLSGDELGSKGMSLLC, GLQKLALNACSLDVAGCGFLA, HLTHLSLSMNPLEDPGMNLLC, PLRDLDLVNCRLTASCCKSLSN, RLRSLDLAANALGDEGIAALC, TLTRLGLEACGLTSEGCKALS, and HLASLNLMRNDLGPRGMTTLC.

This sequence belongs to the NLRP family. Component of the subcortical maternal complex (SCMC), at least composed of NLRP5, KHDC3, OOEP, and TLE6. Within the complex, interacts with OOEP, KHDC3 and TLE6. The SCMC may facilitate translocation of its components between the nuclear and cytoplasmic compartments. As part of the SCMC interacts with the SCMC-associated protein ZBED3. As part of the SCMC interacts with the SCMC-associated protein CFL1/Cofilin-1. Interacts with PRKCE. Interacts with TUBB3 at cytoskeleton microtubules. Post-translationally, phosphorylated by PRKCE. In terms of tissue distribution, oocyte-specific.

It localises to the cytoplasm. The protein resides in the cytoplasmic vesicle. It is found in the secretory vesicle. The protein localises to the cortical granule. Its subcellular location is the mitochondrion. It localises to the nucleus. The protein resides in the nucleolus. It is found in the golgi apparatus. In terms of biological role, component of the subcortical maternal complex (SCMC), a multiprotein complex that plays a key role in early embryonic development. The SCMC complex is a structural constituent of cytoplasmic lattices, which consist in fibrous structures found in the cytoplasm of oocytes and preimplantation embryos. They are required to store maternal proteins critical for embryonic development, such as proteins that control epigenetic reprogramming of the preimplantation embryo, and prevent their degradation or activation. Required for the localization of cortical granules to the cortex of oocytes, via association with the cortical actin scaffold. Required for cortical actin clearance prior to oocyte exocytosis and prevention of polyspermy. Involved in regulating post-fertilization Ca(2+) release and endoplasmic reticulum storage (ER) storage via regulation of cellular localization. May be involved in the localization of mitochondria to the cytoplasm and perinuclear region in oocytes and early stage embryos, independent of its role in CPL formation. This Bos taurus (Bovine) protein is NACHT, LRR and PYD domains-containing protein 5 (NLRP5).